The chain runs to 161 residues: 2-C-methyl-D-erythritol 2,4-cyclodiphosphate synthase (161 aa).

Residues Asp-8 and His-10 each coordinate a divalent metal cation. Residues 8–10 and 34–35 contribute to the 4-CDP-2-C-methyl-D-erythritol 2-phosphate site; these read DVH and HS. His-42 contributes to the a divalent metal cation binding site. 4-CDP-2-C-methyl-D-erythritol 2-phosphate is bound by residues 56–58, 61–65, 100–106, 132–135, and Phe-139; these read DIG, FPDTD, AQSPKMA, and TTEE.

This sequence belongs to the IspF family. Homotrimer. It depends on a divalent metal cation as a cofactor.

The catalysed reaction is 4-CDP-2-C-methyl-D-erythritol 2-phosphate = 2-C-methyl-D-erythritol 2,4-cyclic diphosphate + CMP. Its pathway is isoprenoid biosynthesis; isopentenyl diphosphate biosynthesis via DXP pathway; isopentenyl diphosphate from 1-deoxy-D-xylulose 5-phosphate: step 4/6. Functionally, involved in the biosynthesis of isopentenyl diphosphate (IPP) and dimethylallyl diphosphate (DMAPP), two major building blocks of isoprenoid compounds. Catalyzes the conversion of 4-diphosphocytidyl-2-C-methyl-D-erythritol 2-phosphate (CDP-ME2P) to 2-C-methyl-D-erythritol 2,4-cyclodiphosphate (ME-CPP) with a corresponding release of cytidine 5-monophosphate (CMP). The protein is 2-C-methyl-D-erythritol 2,4-cyclodiphosphate synthase of Clostridioides difficile (strain 630) (Peptoclostridium difficile).